A 295-amino-acid polypeptide reads, in one-letter code: Nucleotide-binding protein LACR_1047 (295 aa).

Residue 12-19 (GMSGAGKT) participates in ATP binding. Residue 63–66 (DMRS) coordinates GTP.

This sequence belongs to the RapZ-like family.

Its function is as follows. Displays ATPase and GTPase activities. The protein is Nucleotide-binding protein LACR_1047 of Lactococcus lactis subsp. cremoris (strain SK11).